Here is a 127-residue protein sequence, read N- to C-terminus: V-type proton ATPase subunit F (127 aa).

The protein belongs to the V-ATPase F subunit family. As to quaternary structure, V-ATPase is a heteromultimeric enzyme made up of two complexes: the ATP-hydrolytic V1 complex and the proton translocation V0 complex. The V1 complex consists of three catalytic AB heterodimers that form a heterohexamer, three peripheral stalks each consisting of EG heterodimers, one central rotor including subunits D and F, and the regulatory subunits C and H. The proton translocation complex V0 consists of the proton transport subunit a, a ring of proteolipid subunits c9c'', rotary subunit d, subunits e and f, and the accessory subunits VhaAC45 and ATP6AP2.

In terms of biological role, subunit of the V1 complex of vacuolar(H+)-ATPase (V-ATPase), a multisubunit enzyme composed of a peripheral complex (V1) that hydrolyzes ATP and a membrane integral complex (V0) that translocates protons. V-ATPase is responsible for acidifying and maintaining the pH of intracellular compartments and in some cell types, is targeted to the plasma membrane, where it is responsible for acidifying the extracellular environment. This chain is V-type proton ATPase subunit F (Vha14), found in Anopheles gambiae (African malaria mosquito).